The following is a 214-amino-acid chain: Large ribosomal subunit protein uL3 (214 aa).

The disordered stretch occupies residues 136 to 156; it reads THGNSLSHRAPGSIGQNQTPG. Residue Gln153 is modified to N5-methylglutamine.

The protein belongs to the universal ribosomal protein uL3 family. Part of the 50S ribosomal subunit. Forms a cluster with proteins L14 and L19. Methylated by PrmB.

Its function is as follows. One of the primary rRNA binding proteins, it binds directly near the 3'-end of the 23S rRNA, where it nucleates assembly of the 50S subunit. This chain is Large ribosomal subunit protein uL3, found in Thioalkalivibrio sulfidiphilus (strain HL-EbGR7).